Reading from the N-terminus, the 291-residue chain is ATP synthase gamma chain (291 aa).

This sequence belongs to the ATPase gamma chain family. As to quaternary structure, F-type ATPases have 2 components, CF(1) - the catalytic core - and CF(0) - the membrane proton channel. CF(1) has five subunits: alpha(3), beta(3), gamma(1), delta(1), epsilon(1). CF(0) has three main subunits: a, b and c.

Its subcellular location is the cell inner membrane. Produces ATP from ADP in the presence of a proton gradient across the membrane. The gamma chain is believed to be important in regulating ATPase activity and the flow of protons through the CF(0) complex. In Burkholderia thailandensis (strain ATCC 700388 / DSM 13276 / CCUG 48851 / CIP 106301 / E264), this protein is ATP synthase gamma chain.